The following is a 274-amino-acid chain: Phosphatidylglycerol--prolipoprotein diacylglyceryl transferase (274 aa).

A run of 7 helical transmembrane segments spans residues 22–42 (LSVR…MWLA), 61–81 (LLFY…VLFY), 96–116 (IWTG…AMVW), 125–145 (FFTV…VGRI), 177–197 (SQLY…NLFW), 204–224 (GAIS…VEFV), and 238–258 (ISMG…MIWV). Arg-144 provides a ligand contact to a 1,2-diacyl-sn-glycero-3-phospho-(1'-sn-glycerol).

The protein belongs to the Lgt family.

Its subcellular location is the cell inner membrane. The catalysed reaction is L-cysteinyl-[prolipoprotein] + a 1,2-diacyl-sn-glycero-3-phospho-(1'-sn-glycerol) = an S-1,2-diacyl-sn-glyceryl-L-cysteinyl-[prolipoprotein] + sn-glycerol 1-phosphate + H(+). The protein operates within protein modification; lipoprotein biosynthesis (diacylglyceryl transfer). Functionally, catalyzes the transfer of the diacylglyceryl group from phosphatidylglycerol to the sulfhydryl group of the N-terminal cysteine of a prolipoprotein, the first step in the formation of mature lipoproteins. This Aeromonas hydrophila subsp. hydrophila (strain ATCC 7966 / DSM 30187 / BCRC 13018 / CCUG 14551 / JCM 1027 / KCTC 2358 / NCIMB 9240 / NCTC 8049) protein is Phosphatidylglycerol--prolipoprotein diacylglyceryl transferase.